We begin with the raw amino-acid sequence, 373 residues long: Chemerin-like receptor 1 (373 aa).

Over 1 to 41 the chain is Extracellular; that stretch reads MRMEDEDYNTSISYGDEYPDYLDSIVVLEDLSPLEARVTRI. The N-linked (GlcNAc...) asparagine glycan is linked to Asn9. Residues 42-64 traverse the membrane as a helical segment; sequence FLVVVYSIVCFLGILGNGLVIII. The Cytoplasmic segment spans residues 65-75; sequence ATFKMKKTVNM. The helical transmembrane segment at 76–97 threads the bilayer; sequence VWFLNLAVADFLFNVFLPIHIT. Topologically, residues 98–114 are extracellular; it reads YAAMDYHWVFGTAMCKI. Cys112 and Cys189 are disulfide-bonded. A helical transmembrane segment spans residues 115–135; sequence SNFLLIHNMFTSVFLLTIISS. Residues 136-154 lie on the Cytoplasmic side of the membrane; the sequence is DRCISVLLPVWSQNHRSVR. Residues 155–176 form a helical membrane-spanning segment; that stretch reads LAYMACMVIWVLAFFLSSPSLV. Topologically, residues 177–224 are extracellular; that stretch reads FRDTANLHGKISCFNNFSLSTPGSSSWPTHSQMDPVGYSRHMVVTVTR. N-linked (GlcNAc...) asparagine glycosylation occurs at Asn192. Residues 225–245 traverse the membrane as a helical segment; it reads FLCGFLVPVLIITACYLTIVC. The Cytoplasmic segment spans residues 246 to 261; sequence KLQRNRLAKTKKPFKI. A helical transmembrane segment spans residues 262 to 282; the sequence is IVTIIITFFLCWCPYHTLNLL. Topologically, residues 283–300 are extracellular; it reads ELHHTAMPGSVFSLGLPL. A helical transmembrane segment spans residues 301 to 320; it reads ATALAIANSCMNPILYVFMG. At 321–373 the chain is on the cytoplasmic side; the sequence is QDFKKFKVALFSRLVNALSEDTGHSSYPSHRSFTKMSSMNERTSMNERETGML. A Phosphoserine modification is found at Ser339. The interval 341-373 is disordered; that stretch reads DTGHSSYPSHRSFTKMSSMNERTSMNERETGML. Thr342 carries the phosphothreonine modification. Residues 344 to 363 are compositionally biased toward polar residues; sequence HSSYPSHRSFTKMSSMNERT. A phosphoserine mark is found at Ser349, Ser352, and Ser358. A compositionally biased stretch (basic and acidic residues) spans 364 to 373; it reads SMNERETGML.

The protein belongs to the chemokine-like receptor (CMKLR) family. As to expression, prominently expressed in developing osseous and cartilaginous tissue. Also found in adult parathyroid glands. Expressed in cardiovascular system, brain, kidney, gastrointestinal tissues and myeloid tissues. Expressed in a broad array of tissues associated with hematopoietic and immune function including, spleen, thymus, appendix, lymph node, bone marrow and fetal liver. Among leukocyte populations abundant expression in monocyte-derived macrophage and immature dendritic cells (DCs). High expression in blood monocytes and low levels in polymorphonuclear cells and T-cells. Expressed on endothelial cells. Highly expressed in differentiating adipocytes.

Its subcellular location is the cell membrane. Receptor for the chemoattractant adipokine chemerin/RARRES2 and for the omega-3 fatty acid derived molecule resolvin E1. Interaction with RARRES2 initiates activation of G proteins G(i)/G(o) and beta-arrestin pathways inducing cellular responses via second messenger pathways such as intracellular calcium mobilization, phosphorylation of MAP kinases MAPK1/MAPK3 (ERK1/2), TYRO3, MAPK14/P38MAPK and PI3K leading to multifunctional effects, like reduction of immune responses, enhancing of adipogenesis and angionesis. Resolvin E1 down-regulates cytokine production in macrophages by reducing the activation of MAPK1/3 (ERK1/2) and NF-kappa-B. Positively regulates adipogenesis and adipocyte metabolism. In terms of biological role, (Microbial infection) Acts as a coreceptor for several SIV strains (SIVMAC316, SIVMAC239, SIVMACL7E-FR and SIVSM62A), as well as a primary HIV-1 strain (92UG024-2). This Homo sapiens (Human) protein is Chemerin-like receptor 1.